A 336-amino-acid chain; its full sequence is UDP-glucose 4-epimerase (336 aa).

NAD(+) is bound by residues 11 to 12, 31 to 36, 58 to 59, 80 to 84, Asn-99, Ser-124, Tyr-149, Lys-153, and Phe-178; these read YI, DNLINS, DI, and FAGLK. Positions 124 and 149 each coordinate substrate. Tyr-149 serves as the catalytic Proton acceptor. Substrate is bound by residues Asn-179, 199–200, 216–218, Arg-231, and 290–293; these read NL, LVY, and RPGD.

Belongs to the NAD(P)-dependent epimerase/dehydratase family. As to quaternary structure, homodimer. NAD(+) serves as cofactor.

The enzyme catalyses UDP-alpha-D-glucose = UDP-alpha-D-galactose. Its pathway is carbohydrate metabolism; galactose metabolism. In terms of biological role, involved in the metabolism of galactose. Catalyzes the conversion of UDP-galactose (UDP-Gal) to UDP-glucose (UDP-Glc) through a mechanism involving the transient reduction of NAD. In Yersinia enterocolitica, this protein is UDP-glucose 4-epimerase (galE).